A 308-amino-acid chain; its full sequence is MIIVTGGAGFIGSNIVKALNDLGRKDILVVDNLKDGTKFANLVDLDIADYCDKEDFIASIIAGDEFGDIDAVFHEGACSATTEWDGKYIMHNNYEYSKELLHYCLDREIPFFYASSAATYGDTKVFREEREFEGPLNVYGYSKFLFDQYVRNILPEAKSPVCGFRYFNVYGPRENHKGSMASVAFHLNNQILKGENPKLFAGSEGFRRDFVYVGDVAAVNIWCWQNGISGIYNLGTGNAESFRAVADAVVKFHGKGEIETIPFPEHLKSRYQEYTQADLTKLRSTGYDKPFKTVAEGVAEYMAWLNRK.

Residues 10-11 (FI), 31-32 (DN), Lys38, Lys53, 75-79 (EGACS), and Asn92 contribute to the NADP(+) site. Residue Tyr139 is the Proton acceptor of the active site. Residue Lys143 coordinates NADP(+). Asn168 contacts substrate. NADP(+) contacts are provided by Val169 and Lys177. Residue Lys177 is the Proton acceptor of the active site. Substrate is bound by residues Ser179, His186, 200–203 (FAGS), Arg208, and Tyr271.

It belongs to the NAD(P)-dependent epimerase/dehydratase family. HldD subfamily. As to quaternary structure, homopentamer. It depends on NADP(+) as a cofactor.

The enzyme catalyses ADP-D-glycero-beta-D-manno-heptose = ADP-L-glycero-beta-D-manno-heptose. Its pathway is nucleotide-sugar biosynthesis; ADP-L-glycero-beta-D-manno-heptose biosynthesis; ADP-L-glycero-beta-D-manno-heptose from D-glycero-beta-D-manno-heptose 7-phosphate: step 4/4. In terms of biological role, catalyzes the interconversion between ADP-D-glycero-beta-D-manno-heptose and ADP-L-glycero-beta-D-manno-heptose via an epimerization at carbon 6 of the heptose. The sequence is that of ADP-L-glycero-D-manno-heptose-6-epimerase from Haemophilus influenzae (strain PittGG).